Here is a 192-residue protein sequence, read N- to C-terminus: Pyridoxal 5'-phosphate synthase subunit PdxT (192 aa).

An L-glutamine-binding site is contributed by 50-52 (GES). Cys-82 acts as the Nucleophile in catalysis. L-glutamine is bound by residues Arg-109 and 136 to 137 (IR). Catalysis depends on charge relay system residues His-172 and Glu-174.

It belongs to the glutaminase PdxT/SNO family. In terms of assembly, in the presence of PdxS, forms a dodecamer of heterodimers. Only shows activity in the heterodimer.

The catalysed reaction is aldehydo-D-ribose 5-phosphate + D-glyceraldehyde 3-phosphate + L-glutamine = pyridoxal 5'-phosphate + L-glutamate + phosphate + 3 H2O + H(+). The enzyme catalyses L-glutamine + H2O = L-glutamate + NH4(+). Its pathway is cofactor biosynthesis; pyridoxal 5'-phosphate biosynthesis. Catalyzes the hydrolysis of glutamine to glutamate and ammonia as part of the biosynthesis of pyridoxal 5'-phosphate. The resulting ammonia molecule is channeled to the active site of PdxS. The sequence is that of Pyridoxal 5'-phosphate synthase subunit PdxT from Haemophilus influenzae (strain PittEE).